Reading from the N-terminus, the 146-residue chain is Large ribosomal subunit protein uL15 (146 aa).

The disordered stretch occupies residues 1-46 (MKLHELQPAPGSRKKAVRVGRGIGSGNGKTAGRGHKGQKARSGGGV). Over residues 21 to 31 (RGIGSGNGKTA) the composition is skewed to gly residues.

The protein belongs to the universal ribosomal protein uL15 family. In terms of assembly, part of the 50S ribosomal subunit.

Its function is as follows. Binds to the 23S rRNA. This is Large ribosomal subunit protein uL15 from Geobacillus thermodenitrificans (strain NG80-2).